Consider the following 208-residue polypeptide: FMN-dependent NADH:quinone oxidoreductase (208 aa).

Residues 17-19 (SNS), 99-102 (MWNL), and 143-146 (SRGG) contribute to the FMN site.

The protein belongs to the azoreductase type 1 family. As to quaternary structure, homodimer. It depends on FMN as a cofactor.

The catalysed reaction is 2 a quinone + NADH + H(+) = 2 a 1,4-benzosemiquinone + NAD(+). It carries out the reaction N,N-dimethyl-1,4-phenylenediamine + anthranilate + 2 NAD(+) = 2-(4-dimethylaminophenyl)diazenylbenzoate + 2 NADH + 2 H(+). Functionally, quinone reductase that provides resistance to thiol-specific stress caused by electrophilic quinones. Also exhibits azoreductase activity. Catalyzes the reductive cleavage of the azo bond in aromatic azo compounds to the corresponding amines. The chain is FMN-dependent NADH:quinone oxidoreductase from Staphylococcus aureus (strain Mu50 / ATCC 700699).